The chain runs to 295 residues: Alpha-ketoglutarate-dependent dioxygenase alkB homolog 3 (295 aa).

The interval 1–48 (MGDKRQRARVQGAWATPTKSQSAARPATPARSRPSQTPGPSWRSKEQQ) is disordered. A compositionally biased stretch (low complexity) spans 22 to 35 (SAARPATPARSRPS). Residues W115 and 141-143 (YTY) each bind substrate. Residues 172–278 (TFNSLLCNFY…RVNLTFRTVY (107 aa)) form the Fe2OG dioxygenase domain. At L177 the chain carries (4R)-5-hydroxyleucine; alternate. (4R)-5-oxoleucine; alternate is present on L177. Residue 179-181 (NFY) coordinates 2-oxoglutarate. Residues H191 and D193 each coordinate Fe cation. D194 is a substrate binding site. A Fe cation-binding site is contributed by H257. 2-oxoglutarate-binding positions include 269-275 (RVNLTFR) and R275.

This sequence belongs to the alkB family. In terms of assembly, interacts with the ASCC complex composed of ASCC1, ASCC2 and ASCC3. Interacts directly with ASCC3, and is thereby recruited to the ASCC complex. Interacts with OTUD4; the interaction is direct. Interacts with USP7 and USP9X. Requires Fe(2+) as cofactor. Ubiquitinated; undergoes 'Lys-48'-linked polyubiquitination. OTUD4 promotes USP7 and USP9X-dependent deubiquitination of 'Lys-48'-polyubiquitinated ALKBH3 promoting the repair of alkylated DNA lesions.

The protein localises to the nucleus. It localises to the cytoplasm. It carries out the reaction an N(1)-methyladenosine in mRNA + 2-oxoglutarate + O2 = an adenosine in mRNA + formaldehyde + succinate + CO2. It catalyses the reaction a methylated nucleobase within DNA + 2-oxoglutarate + O2 = a nucleobase within DNA + formaldehyde + succinate + CO2. The enzyme catalyses an N(1)-methyl-2'-deoxyadenosine in single-stranded DNA + 2-oxoglutarate + O2 = a 2'-deoxyadenosine in single-stranded DNA + formaldehyde + succinate + CO2 + H(+). The catalysed reaction is an N(3)-methyl-2'-deoxycytidine in single-stranded DNA + 2-oxoglutarate + O2 = a 2'-deoxycytidine in single-stranded DNA + formaldehyde + succinate + CO2 + H(+). It carries out the reaction a 3,N(4)-etheno-2'-deoxycytidine in single-stranded DNA + 2-oxoglutarate + O2 + H2O = a 2'-deoxycytidine in single-stranded DNA + glyoxal + succinate + CO2. Activated by ascorbate. Functionally, dioxygenase that mediates demethylation of DNA and RNA containing 1-methyladenosine (m1A). Repairs alkylated DNA containing 1-methyladenosine (m1A) and 3-methylcytosine (m3C) by oxidative demethylation. Has a strong preference for single-stranded DNA. Able to process alkylated m3C within double-stranded regions via its interaction with ASCC3, which promotes DNA unwinding to generate single-stranded substrate needed for ALKBH3. Can repair exocyclic 3,N4-ethenocytosine adducs in single-stranded DNA. Also acts on RNA. Demethylates N(1)-methyladenosine (m1A) RNA, an epigenetic internal modification of messenger RNAs (mRNAs) highly enriched within 5'-untranslated regions (UTRs) and in the vicinity of start codons. Requires molecular oxygen, alpha-ketoglutarate and iron. The polypeptide is Alpha-ketoglutarate-dependent dioxygenase alkB homolog 3 (Rattus norvegicus (Rat)).